The following is a 345-amino-acid chain: S-adenosylmethionine:tRNA ribosyltransferase-isomerase (345 aa).

It belongs to the QueA family. As to quaternary structure, monomer.

It localises to the cytoplasm. The enzyme catalyses 7-aminomethyl-7-carbaguanosine(34) in tRNA + S-adenosyl-L-methionine = epoxyqueuosine(34) in tRNA + adenine + L-methionine + 2 H(+). It participates in tRNA modification; tRNA-queuosine biosynthesis. Functionally, transfers and isomerizes the ribose moiety from AdoMet to the 7-aminomethyl group of 7-deazaguanine (preQ1-tRNA) to give epoxyqueuosine (oQ-tRNA). The protein is S-adenosylmethionine:tRNA ribosyltransferase-isomerase of Shewanella pealeana (strain ATCC 700345 / ANG-SQ1).